A 21-amino-acid polypeptide reads, in one-letter code: S-layer protein 2 (21 aa).

The protein resides in the secreted. Its subcellular location is the cell wall. It is found in the S-layer. Functionally, the S-layer is a paracrystalline mono-layered assembly of proteins which coat the surface of bacteria. This is S-layer protein 2 from Bacillus thuringiensis subsp. konkukian.